A 686-amino-acid polypeptide reads, in one-letter code: Alpha-amylase 1 (686 aa).

Catalysis depends on Glu-125, which acts as the Nucleophile. Asp-216 (proton donor) is an active-site residue.

Belongs to the glycosyl hydrolase 57 family.

The protein localises to the cytoplasm. It catalyses the reaction Endohydrolysis of (1-&gt;4)-alpha-D-glucosidic linkages in polysaccharides containing three or more (1-&gt;4)-alpha-linked D-glucose units.. Functionally, this amylase is a highly liquefying-type: oligomers appeared at the beginning of incubation, followed by a graded decrease in the amounts of maltotriose, maltose and glucose in prolonged incubation. The polypeptide is Alpha-amylase 1 (amyA) (Dictyoglomus thermophilum (strain ATCC 35947 / DSM 3960 / H-6-12)).